Consider the following 851-residue polypeptide: DNA mismatch repair protein MutS (851 aa).

614–621 (GPNMGGKS) provides a ligand contact to ATP.

This sequence belongs to the DNA mismatch repair MutS family.

This protein is involved in the repair of mismatches in DNA. It is possible that it carries out the mismatch recognition step. This protein has a weak ATPase activity. In Yersinia enterocolitica serotype O:8 / biotype 1B (strain NCTC 13174 / 8081), this protein is DNA mismatch repair protein MutS.